Consider the following 401-residue polypeptide: Acetate kinase (401 aa).

Position 10 (N10) interacts with Mg(2+). K17 is a binding site for ATP. R91 is a substrate binding site. D150 (proton donor/acceptor) is an active-site residue. ATP is bound by residues 210–214 (HLGNG), 285–287 (DCR), and 333–337 (GIGEN). Residue E387 coordinates Mg(2+).

It belongs to the acetokinase family. In terms of assembly, homodimer. Requires Mg(2+) as cofactor. The cofactor is Mn(2+).

It is found in the cytoplasm. It catalyses the reaction acetate + ATP = acetyl phosphate + ADP. The protein operates within metabolic intermediate biosynthesis; acetyl-CoA biosynthesis; acetyl-CoA from acetate: step 1/2. Catalyzes the formation of acetyl phosphate from acetate and ATP. Can also catalyze the reverse reaction. This is Acetate kinase from Pasteurella multocida (strain Pm70).